The primary structure comprises 265 residues: Transcription factor Spi-B-like (265 aa).

A TAD1 (Acidic) region spans residues 1 to 31; that stretch reads MLTLEASQLDGPHPSYMFSDSSFYDLDSCKP. The TAD2 stretch occupies residues 42 to 63; sequence AEPPTDPCAGWLELAEPGYEPF. The interval 127–160 is disordered; the sequence is TPLSEDDDFPTDAPALEVSDSDSDENLSPGGSLD. A DNA-binding region (ETS) is located at residues 169–252; that stretch reads LRLYQFLLGL…VKKKLTYQFG (84 aa).

The protein belongs to the ETS family.

It is found in the nucleus. In terms of biological role, may act as a sequence specific transcriptional activator. The chain is Transcription factor Spi-B-like from Paleosuchus palpebrosus (Cuvier's smooth-fronted caiman).